An 85-amino-acid chain; its full sequence is Serine protease inhibitor Cvsi-2 (85 aa).

The first 18 residues, M1–A18, serve as a signal peptide directing secretion.

Post-translationally, contains 6 disulfide bonds. Detected in hemolymph (at protein level). Within the digestive gland expression is limited to the basophil cells of the digestive diverticula.

It is found in the secreted. Its function is as follows. Slow-binding inhibitor of serine proteases. The inhibitor rapidly binds to the protease forming a weak enzyme-inhibitor complex, and this is followed by a slow isomerization forming a tight-binding enzyme-inhibitor complex. Active against subtilisin A with a dissociation constant of 0.18 nM. Active against perkinsin. Not active against thermolysin, papain or pepsin. In Crassostrea virginica (Eastern oyster), this protein is Serine protease inhibitor Cvsi-2.